The following is a 235-amino-acid chain: Probable tetraspanin tspB (235 aa).

Residues Met1 to Asn23 lie on the Cytoplasmic side of the membrane. Residues Thr24–Phe44 traverse the membrane as a helical segment. Residues Ser45–Pro68 lie on the Extracellular side of the membrane. N-linked (GlcNAc...) asparagine glycosylation occurs at Asn62. Residues Ala69–Ala89 form a helical membrane-spanning segment. Over Gly90–Lys93 the chain is Cytoplasmic. A helical transmembrane segment spans residues Leu94–Val114. At Gly115–Ala200 the chain is on the extracellular side. Asn143 and Asn159 each carry an N-linked (GlcNAc...) asparagine glycan. A helical transmembrane segment spans residues Ala201 to Ile221. Residues Arg222–Gln235 are Cytoplasmic-facing.

Belongs to the tetraspanin (TM4SF) family.

The protein localises to the membrane. In Dictyostelium discoideum (Social amoeba), this protein is Probable tetraspanin tspB (tspB).